The chain runs to 528 residues: Phosphoenolpyruvate carboxykinase (ATP) (528 aa).

Residues arginine 56, tyrosine 192, and lysine 198 each contribute to the substrate site. ATP contacts are provided by residues lysine 198, histidine 217, and 233–241; that span reads GLSGTGKTT. Residues lysine 198 and histidine 217 each contribute to the Mn(2+) site. Residue aspartate 254 participates in Mn(2+) binding. Residues glutamate 282, arginine 319, and threonine 444 each contribute to the ATP site. Arginine 319 is a binding site for substrate.

Belongs to the phosphoenolpyruvate carboxykinase (ATP) family. Requires Mn(2+) as cofactor.

It is found in the cytoplasm. It catalyses the reaction oxaloacetate + ATP = phosphoenolpyruvate + ADP + CO2. Its pathway is carbohydrate biosynthesis; gluconeogenesis. In terms of biological role, involved in the gluconeogenesis. Catalyzes the conversion of oxaloacetate (OAA) to phosphoenolpyruvate (PEP) through direct phosphoryl transfer between the nucleoside triphosphate and OAA. This is Phosphoenolpyruvate carboxykinase (ATP) from Bacillus cereus (strain B4264).